Consider the following 397-residue polypeptide: Putative protein FAM47D (397 aa).

Belongs to the FAM47 family.

The polypeptide is Putative protein FAM47D (FAM47DP) (Homo sapiens (Human)).